The primary structure comprises 190 residues: dCTP deaminase (190 aa).

Residue 113–118 (KSTYAR) participates in dCTP binding. Glutamate 139 acts as the Proton donor/acceptor in catalysis. DCTP contacts are provided by glutamine 158, tyrosine 172, lysine 181, and glutamine 182.

It belongs to the dCTP deaminase family. In terms of assembly, homotrimer.

The enzyme catalyses dCTP + H2O + H(+) = dUTP + NH4(+). The protein operates within pyrimidine metabolism; dUMP biosynthesis; dUMP from dCTP (dUTP route): step 1/2. Functionally, catalyzes the deamination of dCTP to dUTP. The protein is dCTP deaminase of Chlamydia trachomatis serovar L2 (strain ATCC VR-902B / DSM 19102 / 434/Bu).